Consider the following 379-residue polypeptide: Zinc finger protein 883 (379 aa).

13 C2H2-type zinc fingers span residues 13-35 (YLCT…QKTH), 41-63 (YECK…QRIH), 69-91 (YECN…QRVH), 97-119 (YECN…ERIH), 125-147 (YPCN…HRIH), 153-175 (YECT…QGIH), 181-203 (YQCK…QRTH), 209-231 (YECN…QRIH), 237-259 (YECN…QRTH), 265-287 (YVCK…LKIH), 293-315 (YQCN…QRTH), 321-343 (YQCN…KRIH), and 349-371 (YQCT…QKTH).

This sequence belongs to the krueppel C2H2-type zinc-finger protein family.

It localises to the nucleus. Its function is as follows. May be involved in transcriptional regulation. The protein is Zinc finger protein 883 (ZNF883) of Homo sapiens (Human).